We begin with the raw amino-acid sequence, 468 residues long: UDP-N-acetylmuramate--L-alanine ligase (468 aa).

Residue 112 to 118 (GTHGKTT) coordinates ATP.

This sequence belongs to the MurCDEF family.

It is found in the cytoplasm. It carries out the reaction UDP-N-acetyl-alpha-D-muramate + L-alanine + ATP = UDP-N-acetyl-alpha-D-muramoyl-L-alanine + ADP + phosphate + H(+). Its pathway is cell wall biogenesis; peptidoglycan biosynthesis. Cell wall formation. The protein is UDP-N-acetylmuramate--L-alanine ligase of Bordetella petrii (strain ATCC BAA-461 / DSM 12804 / CCUG 43448).